We begin with the raw amino-acid sequence, 309 residues long: tRNA dimethylallyltransferase (309 aa).

10–17 (GPTAVGKT) is a binding site for ATP. 12 to 17 (TAVGKT) serves as a coordination point for substrate. Residues 35-38 (DSMQ) form an interaction with substrate tRNA region.

It belongs to the IPP transferase family. In terms of assembly, monomer. It depends on Mg(2+) as a cofactor.

It catalyses the reaction adenosine(37) in tRNA + dimethylallyl diphosphate = N(6)-dimethylallyladenosine(37) in tRNA + diphosphate. Catalyzes the transfer of a dimethylallyl group onto the adenine at position 37 in tRNAs that read codons beginning with uridine, leading to the formation of N6-(dimethylallyl)adenosine (i(6)A). The sequence is that of tRNA dimethylallyltransferase from Clostridium botulinum (strain Eklund 17B / Type B).